We begin with the raw amino-acid sequence, 146 residues long: Hemoglobin subunit beta (146 aa).

Val-1 carries the N-acetylvaline modification. The Globin domain maps to 2 to 146 (HLTADEKSAV…VATALGHKYH (145 aa)). Phosphothreonine is present on Thr-12. Ser-44 carries the phosphoserine modification. Lys-59 bears the N6-acetyllysine mark. His-63 is a heme b binding site. Lys-82 is subject to N6-acetyllysine. A heme b-binding site is contributed by His-92. Cys-93 carries the S-nitrosocysteine modification. N6-acetyllysine is present on Lys-144.

It belongs to the globin family. In terms of assembly, heterotetramer of two alpha chains and two beta chains. Red blood cells.

Involved in oxygen transport from the lung to the various peripheral tissues. The sequence is that of Hemoglobin subunit beta (HBB) from Antrozous pallidus (Pallid bat).